We begin with the raw amino-acid sequence, 380 residues long: Acid phosphatase-like protein XcAP-3 (380 aa).

Residues 1 to 19 (MKATILLFLVLAVVQLSTA) form the signal peptide. Disulfide bonds link C147/C374, C167/C221, and C347/C351.

The protein belongs to the histidine acid phosphatase family.

The protein resides in the secreted. Functionally, probably modulates blood feeding of fleas on vertebrate species by binding and sequestering different mediators involved in the host response. Binds histamine. Binds leukotriene C4. Does not bind serotonin, adrenaline, noradrenaline, leukotriene B4, leukotriene D4, leukotriene E4, ADP, and stable analogs of thromboxane A2: U-46619 and cTXA2. This Xenopsylla cheopis (Oriental rat flea) protein is Acid phosphatase-like protein XcAP-3.